A 204-amino-acid polypeptide reads, in one-letter code: Phosphopantothenoylcysteine decarboxylase (204 aa).

FMN-binding positions include Phe-59 and 104 to 107 (DANT). Asn-140 is a substrate binding site. The active-site Proton donor is Cys-173.

The protein belongs to the HFCD (homooligomeric flavin containing Cys decarboxylase) superfamily. As to quaternary structure, homotrimer. FMN is required as a cofactor.

The catalysed reaction is N-[(R)-4-phosphopantothenoyl]-L-cysteine + H(+) = (R)-4'-phosphopantetheine + CO2. It participates in cofactor biosynthesis; coenzyme A biosynthesis; CoA from (R)-pantothenate: step 3/5. Its function is as follows. Catalyzes the decarboxylation of the cysteine moiety of 4-phosphopantothenoylcysteine to form 4'-phosphopantotheine and this reaction forms part of the biosynthesis of coenzyme A. The sequence is that of Phosphopantothenoylcysteine decarboxylase (PPCDC) from Homo sapiens (Human).